A 364-amino-acid chain; its full sequence is Putative protein C31H2.4 (364 aa).

VOC domains lie at 6 to 134 (AIHH…LGEF) and 161 to 320 (LMDH…IFSK). Fe cation-binding residues include His-164, His-248, and Glu-331.

It belongs to the 4HPPD family. Fe cation serves as cofactor.

The chain is Putative protein C31H2.4 from Caenorhabditis elegans.